Reading from the N-terminus, the 484-residue chain is Crt homolog 2 (484 aa).

Residues Met1–Thr57 lie on the Cytoplasmic side of the membrane. The chain crosses the membrane as a helical span at residues Ala58–Leu78. Residues Lys79–Gln94 lie on the Vacuolar side of the membrane. Residues Leu95–Thr115 traverse the membrane as a helical segment. The Cytoplasmic segment spans residues Asn116 to Trp128. The helical transmembrane segment at Lys129 to Ile149 threads the bilayer. Residues Lys150–Pro154 are Vacuolar-facing. A helical membrane pass occupies residues Leu155–Leu175. The Cytoplasmic portion of the chain corresponds to Lys176–Arg178. Residues Tyr179–Ile199 form a helical membrane-spanning segment. At Pro200–Asn210 the chain is on the vacuolar side. A glycan (N-linked (GlcNAc...) asparagine) is linked at Asn206. The chain crosses the membrane as a helical span at residues Met211–Tyr231. Residues Lys232–Val244 are Cytoplasmic-facing. A helical membrane pass occupies residues Trp245–Ile265. Residues Asn266–Trp328 lie on the Vacuolar side of the membrane. Asn302 carries N-linked (GlcNAc...) asparagine glycosylation. A helical membrane pass occupies residues Val329 to Leu349. At Lys350–Thr355 the chain is on the cytoplasmic side. A helical membrane pass occupies residues Val356 to Met378. Residues Gly379–Ser382 lie on the Vacuolar side of the membrane. Residues Asn383–Tyr403 form a helical membrane-spanning segment. Residues Arg404 to Gln484 lie on the Cytoplasmic side of the membrane.

The protein belongs to the CRT-like transporter family.

Its subcellular location is the vacuole membrane. In terms of biological role, nutrient transporter. Involved in maintaining the osmotic homeostasis of the digestive vacuole. The chain is Crt homolog 2 (crtp2) from Dictyostelium discoideum (Social amoeba).